The following is an 898-amino-acid chain: Translation initiation factor IF-2 (898 aa).

Disordered regions lie at residues 51-70 and 114-303; these read RKSHGAEDEGSGKKITLKRK and LAAE…KQHG. Basic and acidic residues-rich tracts occupy residues 114-171 and 184-258; these read LAAE…EKSK and PAKE…DDKG. The region spanning 398–567 is the tr-type G domain; sequence HRAPVVTIMG…LLQSELLELQ (170 aa). Residues 407 to 414 are G1; sequence GHVDHGKT. 407-414 serves as a coordination point for GTP; the sequence is GHVDHGKT. The G2 stretch occupies residues 432 to 436; sequence GITQH. The G3 stretch occupies residues 453-456; the sequence is DTPG. GTP-binding positions include 453–457 and 507–510; these read DTPGH and NKID. The tract at residues 507 to 510 is G4; the sequence is NKID. Residues 543–545 are G5; that stretch reads SAH.

The protein belongs to the TRAFAC class translation factor GTPase superfamily. Classic translation factor GTPase family. IF-2 subfamily.

It is found in the cytoplasm. One of the essential components for the initiation of protein synthesis. Protects formylmethionyl-tRNA from spontaneous hydrolysis and promotes its binding to the 30S ribosomal subunits. Also involved in the hydrolysis of GTP during the formation of the 70S ribosomal complex. This chain is Translation initiation factor IF-2, found in Alcanivorax borkumensis (strain ATCC 700651 / DSM 11573 / NCIMB 13689 / SK2).